The primary structure comprises 238 residues: MRIDNRELNQLRSISFERHYTKHAEGSVLVSFGDTKVLCTASVESGVPRWLKGKGKGWITAEYGMLPRATNTRNQREAARGKQSGRTQEIQRLIGRSLRAMIDLSKLGENTIYLDCDVLQADGGTRTASVTGAAIALIDALESIQKTKKLKADPLIGLVAAVSVGMKDGEAYLDLNYEEDASCDTDLNVVMTQKGEFIELQGTAEEKPFTRAQADDMLVLAEKGIAELIAMQKTALGW.

Phosphate is bound by residues Arg86 and 124 to 126 (GTR).

It belongs to the RNase PH family. Homohexameric ring arranged as a trimer of dimers.

The enzyme catalyses tRNA(n+1) + phosphate = tRNA(n) + a ribonucleoside 5'-diphosphate. Phosphorolytic 3'-5' exoribonuclease that plays an important role in tRNA 3'-end maturation. Removes nucleotide residues following the 3'-CCA terminus of tRNAs; can also add nucleotides to the ends of RNA molecules by using nucleoside diphosphates as substrates, but this may not be physiologically important. Probably plays a role in initiation of 16S rRNA degradation (leading to ribosome degradation) during starvation. The sequence is that of Ribonuclease PH from Psychrobacter arcticus (strain DSM 17307 / VKM B-2377 / 273-4).